The primary structure comprises 355 residues: Tyrosine recombinase XerC (355 aa).

Positions 4–89 (TQFDGDIDSF…AVRGFFAWAY (86 aa)) constitute a Core-binding (CB) domain. The disordered stretch occupies residues 138–180 (DDGGAAAASGSGKAAGKTADKSADTVNRSEAPARADKRDNARV). Positions 141 to 154 (GAAAASGSGKAAGK) are enriched in low complexity. In terms of domain architecture, Tyr recombinase spans 158-349 (KSADTVNRSE…SIEQLKNRYG (192 aa)). Residues 168 to 178 (APARADKRDNA) are compositionally biased toward basic and acidic residues. Active-site residues include arginine 200, lysine 224, histidine 301, arginine 304, and histidine 327. Tyrosine 336 (O-(3'-phospho-DNA)-tyrosine intermediate) is an active-site residue.

This sequence belongs to the 'phage' integrase family. XerC subfamily. As to quaternary structure, forms a cyclic heterotetrameric complex composed of two molecules of XerC and two molecules of XerD.

Its subcellular location is the cytoplasm. In terms of biological role, site-specific tyrosine recombinase, which acts by catalyzing the cutting and rejoining of the recombining DNA molecules. The XerC-XerD complex is essential to convert dimers of the bacterial chromosome into monomers to permit their segregation at cell division. It also contributes to the segregational stability of plasmids. The polypeptide is Tyrosine recombinase XerC (Bifidobacterium longum subsp. infantis (strain ATCC 15697 / DSM 20088 / JCM 1222 / NCTC 11817 / S12)).